We begin with the raw amino-acid sequence, 439 residues long: MKKPPLYKSLYAQVIVAIIIGVLLGHFLPETGTAMKPLGDGFIKLIKMIIAPVIFCTVVIGIAGMEDMKKVGKTGGLALLYFEVMSTVALLVGLIIVNVLQPGAGMNVDVSTLDTASLASYTAPGKLETVTEFAMHIIPMSMIDAFAKGDVLQVLLVSVLFGFALQKLGGRGTLVFDFIEKISHVLFTIVGFIMRAAPVGAFGAMAFTIGKYGISSLLSLGKLMGAFYLTCLFFIFVVLGIVTRLHGFSIWKFVKYIKEELLIVLGTSSSESVLPRMIAKMENMGAKKSVVGLVIPTGYSFNLDGTAIYLTMAAVFIAQATNTPMSLMQQVTLLAVLLLTSKGAAGITGSGFIVLAATLSAVGHVPVAGLALILGIDRFMSEARALTNTIGNGVATLVVAKWVGDLDMDKLHAELDNESPQAADQPEKILDQTNTKLGA.

A run of 9 helical transmembrane segments spans residues Ser-9 to Pro-29, Leu-45 to Met-65, Leu-77 to Val-97, Ala-145 to Leu-165, Val-185 to Met-205, Leu-223 to Thr-243, Val-290 to Leu-310, Thr-332 to Phe-352, and Ile-353 to Ile-373. The disordered stretch occupies residues Asn-417 to Ala-439.

This sequence belongs to the dicarboxylate/amino acid:cation symporter (DAACS) (TC 2.A.23) family.

The protein localises to the cell inner membrane. Responsible for the transport of dicarboxylates such as succinate, fumarate, and malate from the periplasm across the membrane. The sequence is that of C4-dicarboxylate transport protein from Janthinobacterium sp. (strain Marseille) (Minibacterium massiliensis).